Here is a 439-residue protein sequence, read N- to C-terminus: Synaptotagmin-B (439 aa).

Topologically, residues 1–74 (MQAEMNQSAE…KEKFMNELQK (74 aa)) are vesicular. N-linked (GlcNAc...) asparagine glycans are attached at residues Asn6 and Asn46. Residues 75-101 (IPLPPWALIAIAIVSGLLLLTCCLCIC) traverse the membrane as a helical segment. The Cytoplasmic portion of the chain corresponds to 102-439 (KKCCCKKKKN…EVDVALGLKK (338 aa)). The disordered stretch occupies residues 113–155 (KEKGKGKKNDINMKDVKGSGGNQDDDDAETGLTEGEDKEEEAK). Basic and acidic residues predominate over residues 119-129 (KKNDINMKDVK). Residues 135–151 (QDDDDAETGLTEGEDKE) show a composition bias toward acidic residues. The interval 153–399 (EAKEEEKLGK…AIGKIFVGSN (247 aa)) is phospholipid binding. 2 consecutive C2 domains span residues 159 to 278 (KLGK…EEWR) and 290 to 423 (KLGD…AQWH). Residues Leu189, Asp190, Asp196, Asp248, Phe249, Asp250, Ser253, Lys254, Asp256, Asp321, Asp327, Asp381, Asp383, and Asp389 each coordinate Ca(2+).

Belongs to the synaptotagmin family. As to quaternary structure, homodimer or homotrimer (possible). Ca(2+) serves as cofactor. In terms of tissue distribution, spinal cord, brainstem, midbrain and electric organ.

It localises to the cytoplasmic vesicle. The protein localises to the secretory vesicle. Its subcellular location is the synaptic vesicle membrane. The protein resides in the synapse. In terms of biological role, may have a regulatory role in the membrane interactions during trafficking of synaptic vesicles at the active zone of the synapse. It binds acidic phospholipids with a specificity that requires the presence of both an acidic head group and a diacyl backbone. The polypeptide is Synaptotagmin-B (P65-B) (Diplobatis ommata (Ocellated electric ray)).